Reading from the N-terminus, the 170-residue chain is Crossover junction endodeoxyribonuclease RuvC (170 aa).

Catalysis depends on residues D11, E71, and D143. Residues D11, E71, and D143 each contribute to the Mg(2+) site.

The protein belongs to the RuvC family. In terms of assembly, homodimer which binds Holliday junction (HJ) DNA. The HJ becomes 2-fold symmetrical on binding to RuvC with unstacked arms; it has a different conformation from HJ DNA in complex with RuvA. In the full resolvosome a probable DNA-RuvA(4)-RuvB(12)-RuvC(2) complex forms which resolves the HJ. Mg(2+) serves as cofactor.

The protein localises to the cytoplasm. It carries out the reaction Endonucleolytic cleavage at a junction such as a reciprocal single-stranded crossover between two homologous DNA duplexes (Holliday junction).. The RuvA-RuvB-RuvC complex processes Holliday junction (HJ) DNA during genetic recombination and DNA repair. Endonuclease that resolves HJ intermediates. Cleaves cruciform DNA by making single-stranded nicks across the HJ at symmetrical positions within the homologous arms, yielding a 5'-phosphate and a 3'-hydroxyl group; requires a central core of homology in the junction. The consensus cleavage sequence is 5'-(A/T)TT(C/G)-3'. Cleavage occurs on the 3'-side of the TT dinucleotide at the point of strand exchange. HJ branch migration catalyzed by RuvA-RuvB allows RuvC to scan DNA until it finds its consensus sequence, where it cleaves and resolves the cruciform DNA. The polypeptide is Crossover junction endodeoxyribonuclease RuvC (Rhizobium meliloti (strain 1021) (Ensifer meliloti)).